The primary structure comprises 1721 residues: MAGAWLRWGLLLWAGLLASSAHGRLRRITYVVHPGPGLAAGALPLSGPPRSRTFNVALNARYSRSSAAAGAPSRASPGVPSERTRRTSKPGGAALQGLRPPPPPPPEPARPAVPGGQLHPNPGGHPAAAPFTKQGRQVVRSKVPQETQSGGGSRLQVHQKQQLQGVNVCGGRCCHGWSKAPGSQRCTKPSCVPPCQNGGMCLRPQLCVCKPGTKGKACETIAAQDTSSPVFGGQSPGAASSWGPPEQAAKHTSSKKADTLPRVSPVAQMTLTLKPKPSVGLPQQIHSQVTPLSSQSVVIHHGQTQEYVLKPKYFPAQKGISGEQSTEGSFPLRYVQDQVAAPFQLSNHTGRIKVVFTPSICKVTCTKGSCQNSCEKGNTTTLISENGHAADTLTATNFRVVICHLPCMNGGQCSSRDKCQCPPNFTGKLCQIPVHGASVPKLYQHSQQPGKALGTHVIHSTHTLPLTVTSQQGVKVKFPPNIVNIHVKHPPEASVQIHQVSRIDGPTGQKTKEAQPGQSQVSYQGLPVQKTQTIHSTYSHQQVIPHVYPVAAKTQLGRCFQETIGSQCGKALPGLSKQEDCCGTVGTSWGFNKCQKCPKKPSYHGYNQMMECLPGYKRVNNTFCQDINECQLQGVCPNGECLNTMGSYRCTCKIGFGPDPTFSSCVPDPPVISEEKGPCYRLVSSGRQCMHPLSVHLTKQLCCCSVGKAWGPHCEKCPLPGTAAFKEICPGGMGYTVSGVHRRRPIHHHVGKGPVFVKPKNTQPVAKSTHPPPLPAKEEPVEALTFSREHGPGVAEPEVATAPPEKEIPSLDQEKTKLEPGQPQLSPGISTIHLHPQFPVVIEKTSPPVPVEVAPEASTSSASQVIAPTQVTEINECTVNPDICGAGHCINLPVRYTCICYEGYRFSEQQRKCVDIDECTQVQHLCSQGRCENTEGSFLCICPAGFMASEEGTNCIDVDECLRPDVCGEGHCVNTVGAFRCEYCDSGYRMTQRGRCEDIDECLNPSTCPDEQCVNSPGSYQCVPCTEGFRGWNGQCLDVDECLEPNVCANGDCSNLEGSYMCSCHKGYTRTPDHKHCRDIDECQQGNLCVNGQCKNTEGSFRCTCGQGYQLSAAKDQCEDIDECQHRHLCAHGQCRNTEGSFQCVCDQGYRASGLGDHCEDINECLEDKSVCQRGDCINTAGSYDCTCPDGFQLDDNKTCQDINECEHPGLCGPQGECLNTEGSFHCVCQQGFSISADGRTCEDIDECVNNTVCDSHGFCDNTAGSFRCLCYQGFQAPQDGQGCVDVNECELLSGVCGEAFCENVEGSFLCVCADENQEYSPMTGQCRSRTSTDLDVDVDQPKEEKKECYYNLNDASLCDNVLAPNVTKQECCCTSGVGWGDNCEIFPCPVLGTAEFTEMCPKGKGFVPAGESSSEAGGENYKDADECLLFGQEICKNGFCLNTRPGYECYCKQGTYYDPVKLQCFDMDECQDPSSCIDGQCVNTEGSYNCFCTHPMVLDASEKRCIRPAESNEQIEETDVYQDLCWEHLSDEYVCSRPLVGKQTTYTECCCLYGEAWGMQCALCPLKDSDDYAQLCNIPVTGRRQPYGRDALVDFSEQYTPEADPYFIQDRFLNSFEELQAEECGILNGCENGRCVRVQEGYTCDCFDGYHLDTAKMTCVDVNECDELNNRMSLCKNAKCINTDGSYKCLCLPGYVPSDKPNYCTPLNTALNLEKDSDLE.

An N-terminal signal peptide occupies residues 1-23 (MAGAWLRWGLLLWAGLLASSAHG). Over residues 64–81 (RSSAAAGAPSRASPGVPS) the composition is skewed to low complexity. Positions 64 to 158 (RSSAAAGAPS…SGGGSRLQVH (95 aa)) are disordered. Over residues 99–111 (RPPPPPPPEPARP) the composition is skewed to pro residues. A compositionally biased stretch (low complexity) spans 112–130 (AVPGGQLHPNPGGHPAAAP). An EGF-like 1 domain is found at 187-219 (TKPSCVPPCQNGGMCLRPQLCVCKPGTKGKACE). Cystine bridges form between C191/C201, C195/C207, and C209/C218. Residues 228–259 (SPVFGGQSPGAASSWGPPEQAAKHTSSKKADT) form a disordered region. N-linked (GlcNAc...) asparagine glycans are attached at residues N347 and N378. The 33-residue stretch at 399 to 431 (RVVICHLPCMNGGQCSSRDKCQCPPNFTGKLCQ) folds into the EGF-like 2 domain. Disulfide bonds link C403/C413, C407/C419, C421/C430, C559/C581, C568/C594, and C582/C597. Residue N424 is glycosylated (N-linked (GlcNAc...) asparagine). Residues 557-609 (GRCFQETIGSQCGKALPGLSKQEDCCGTVGTSWGFNKCQKCPKKPSYHGYNQM) form the TB 1 domain. N620 carries N-linked (GlcNAc...) asparagine glycosylation. The region spanning 626–663 (DINECQLQGVCPNGECLNTMGSYRCTCKIGFGPDPTFS) is the EGF-like 3; calcium-binding domain. Cystine bridges form between C630/C641, C636/C650, C652/C665, C679/C702, C689/C714, C703/C717, and C704/C729. S647 carries an O-linked (Glc) serine glycan. Positions 677 to 729 (GPCYRLVSSGRQCMHPLSVHLTKQLCCCSVGKAWGPHCEKCPLPGTAAFKEIC) constitute a TB 2 domain. Residues 750–811 (VGKGPVFVKP…APPEKEIPSL (62 aa)) form a disordered region. O-linked (GalNAc...) threonine glycans are attached at residues T769 and T801. The 38-residue stretch at 873 to 910 (EINECTVNPDICGAGHCINLPVRYTCICYEGYRFSEQQ) folds into the EGF-like 4; calcium-binding domain. Intrachain disulfides connect C877–C889, C884–C898, C900–C913, C919–C931, C926–C940, C942–C955, C961–C972, C967–C981, C984–C996, C1002–C1013, C1008–C1022, C1025–C1036, C1042–C1053, C1048–C1062, C1064–C1077, C1083–C1094, C1089–C1103, C1105–C1118, C1124–C1135, C1130–C1144, C1146–C1159, C1165–C1177, C1172–C1186, C1188–C1200, C1206–C1218, C1212–C1227, C1229–C1242, C1248–C1260, and C1254–C1269. One can recognise an EGF-like 5; calcium-binding domain in the interval 915–956 (DIDECTQVQHLCSQGRCENTEGSFLCICPAGFMASEEGTNCI). A glycan (O-linked (Glc) serine) is linked at S937. The 41-residue stretch at 957–997 (DVDECLRPDVCGEGHCVNTVGAFRCEYCDSGYRMTQRGRCE) folds into the EGF-like 6; calcium-binding domain. N974 is modified ((3R)-3-hydroxyasparagine). One can recognise an EGF-like 7; calcium-binding domain in the interval 998–1037 (DIDECLNPSTCPDEQCVNSPGSYQCVPCTEGFRGWNGQCL). S1019 is a glycosylation site (O-linked (Glc) serine). Positions 1038–1078 (DVDECLEPNVCANGDCSNLEGSYMCSCHKGYTRTPDHKHCR) constitute an EGF-like 8; calcium-binding domain. S1059 is a glycosylation site (O-linked (Glc) serine). Residues 1079 to 1119 (DIDECQQGNLCVNGQCKNTEGSFRCTCGQGYQLSAAKDQCE) form the EGF-like 9; calcium-binding domain. An EGF-like 10; calcium-binding domain is found at 1120–1160 (DIDECQHRHLCAHGQCRNTEGSFQCVCDQGYRASGLGDHCE). A (3R)-3-hydroxyasparagine modification is found at N1137. S1141 is a glycosylation site (O-linked (Glc) serine). Residues 1161–1201 (DINECLEDKSVCQRGDCINTAGSYDCTCPDGFQLDDNKTCQ) form the EGF-like 11; calcium-binding domain. Residues 1174-1176 (RGD) carry the Cell attachment site motif. N-linked (GlcNAc...) asparagine glycosylation occurs at N1197. Residues 1202-1243 (DINECEHPGLCGPQGECLNTEGSFHCVCQQGFSISADGRTCE) form the EGF-like 12; calcium-binding domain. S1224 carries O-linked (Glc) serine glycosylation. The EGF-like 13; calcium-binding domain maps to 1244 to 1281 (DIDECVNNTVCDSHGFCDNTAGSFRCLCYQGFQAPQDG). N1250 is a glycosylation site (N-linked (GlcNAc...) asparagine). The EGF-like 14; calcium-binding domain occupies 1286 to 1328 (DVNECELLSGVCGEAFCENVEGSFLCVCADENQEYSPMTGQCR). Residues 1344–1411 (EEKKECYYNL…PKGKGFVPAG (68 aa)) form an 8-Cys3 region region. A TB 3 domain is found at 1347–1401 (KECYYNLNDASLCDNVLAPNVTKQECCCTSGVGWGDNCEIFPCPVLGTAEFTEMC). 4 disulfide bridges follow: C1349–C1372, C1359–C1384, C1373–C1389, and C1374–C1401. N1366 is a glycosylation site (N-linked (GlcNAc...) asparagine). Position 1414 is a phosphoserine; by FAM20C (S1414). In terms of domain architecture, EGF-like 15; calcium-binding spans 1424 to 1466 (DADECLLFGQEICKNGFCLNTRPGYECYCKQGTYYDPVKLQCF). An EGF-like 16; calcium-binding domain is found at 1467 to 1503 (DMDECQDPSSCIDGQCVNTEGSYNCFCTHPMVLDASE). 6 disulfide bridges follow: C1471–C1482, C1477–C1491, C1526–C1550, C1536–C1562, C1551–C1565, and C1552–C1577. The O-linked (Glc) serine glycan is linked to S1488. The segment at 1507-1721 (IRPAESNEQI…LNLEKDSDLE (215 aa)) is C-terminal domain. The TB 4 domain maps to 1524–1577 (DLCWEHLSDEYVCSRPLVGKQTTYTECCCLYGEAWGMQCALCPLKDSDDYAQLC). 2 positions are modified to phosphoserine: S1597 and S1616. Residues 1621 to 1657 (QAEECGILNGCENGRCVRVQEGYTCDCFDGYHLDTAK) enclose the EGF-like 17 domain. Cystine bridges form between C1625-C1636, C1631-C1645, C1666-C1681, C1676-C1690, and C1692-C1705. The 45-residue stretch at 1662–1706 (DVNECDELNNRMSLCKNAKCINTDGSYKCLCLPGYVPSDKPNYCT) folds into the EGF-like 18; calcium-binding domain. S1687 carries an O-linked (Glc) serine glycan.

Belongs to the LTBP family. Interacts with TGFB1; associates via disulfide bonds with the Latency-associated peptide chain (LAP) regulatory chain of TGFB1, leading to regulate activation of TGF-beta-1. LTBP1 does not bind directly to TGF-beta-1, the active chain of TGFB1. Interacts (via C-terminal domain) with FBN1 (via N-terminal domain). Interacts with FBN2. Interacts with ADAMTSL2. Interacts with EFEMP2. In terms of processing, contains hydroxylated asparagine residues. Post-translationally, isoform Short N-terminus is blocked. Two intrachain disulfide bonds from the TB3 domain are rearranged upon TGFB1 binding, and form interchain bonds with TGFB1 propeptide, anchoring it to the extracellular matrix. In terms of processing, O-glycosylated on serine residues by POGLUT2 and POGLUT3. Expressed in the aorta (at protein level). Isoform Long: Expressed in fibroblasts.

The protein localises to the secreted. The protein resides in the extracellular space. Its subcellular location is the extracellular matrix. Key regulator of transforming growth factor beta (TGFB1, TGFB2 and TGFB3) that controls TGF-beta activation by maintaining it in a latent state during storage in extracellular space. Associates specifically via disulfide bonds with the Latency-associated peptide (LAP), which is the regulatory chain of TGF-beta, and regulates integrin-dependent activation of TGF-beta. Outcompeted by LRRC32/GARP for binding to LAP regulatory chain of TGF-beta. In Homo sapiens (Human), this protein is Latent-transforming growth factor beta-binding protein 1.